A 275-amino-acid chain; its full sequence is tRNA pseudouridine synthase A (275 aa).

Asp-56 serves as the catalytic Nucleophile. Tyr-114 serves as a coordination point for substrate.

The protein belongs to the tRNA pseudouridine synthase TruA family. Homodimer.

It carries out the reaction uridine(38/39/40) in tRNA = pseudouridine(38/39/40) in tRNA. Functionally, formation of pseudouridine at positions 38, 39 and 40 in the anticodon stem and loop of transfer RNAs. This Polynucleobacter asymbioticus (strain DSM 18221 / CIP 109841 / QLW-P1DMWA-1) (Polynucleobacter necessarius subsp. asymbioticus) protein is tRNA pseudouridine synthase A.